The following is a 267-amino-acid chain: Indole-3-glycerol phosphate synthase (267 aa).

The protein belongs to the TrpC family.

It carries out the reaction 1-(2-carboxyphenylamino)-1-deoxy-D-ribulose 5-phosphate + H(+) = (1S,2R)-1-C-(indol-3-yl)glycerol 3-phosphate + CO2 + H2O. The protein operates within amino-acid biosynthesis; L-tryptophan biosynthesis; L-tryptophan from chorismate: step 4/5. In Cupriavidus necator (strain ATCC 17699 / DSM 428 / KCTC 22496 / NCIMB 10442 / H16 / Stanier 337) (Ralstonia eutropha), this protein is Indole-3-glycerol phosphate synthase.